A 205-amino-acid chain; its full sequence is Coenzyme Q-binding protein COQ10, mitochondrial (205 aa).

The protein belongs to the COQ10 family. Interacts with coenzyme Q.

The protein resides in the mitochondrion inner membrane. Its function is as follows. Required for the function of coenzyme Q in the respiratory chain. May serve as a chaperone or may be involved in the transport of Q6 from its site of synthesis to the catalytic sites of the respiratory complexes. The protein is Coenzyme Q-binding protein COQ10, mitochondrial (coq10-1) of Dictyostelium discoideum (Social amoeba).